The sequence spans 320 residues: Cytochrome c biogenesis protein CcsA (320 aa).

The next 7 helical transmembrane spans lie at 14 to 34 (VLLLGLAAFALLLTALPWCFW), 68 to 88 (GHFPISNLYESLCFLAWACTL), 101 to 121 (LVAASATPMGLGCIAFASFAL), 146 to 166 (VIMVSYAALLVGSLLSVAVLM), 226 to 246 (TITVGFLLLTVGIISGAVWAN), 260 to 277 (TWALICWLVYAAYLHTRL), and 289 to 309 (VASLGLVVIVVCYIGVNLLGI).

It belongs to the CcmF/CycK/Ccl1/NrfE/CcsA family. May interact with ccs1.

The protein resides in the cellular thylakoid membrane. Its function is as follows. Required during biogenesis of c-type cytochromes (cytochrome c6 and cytochrome f) at the step of heme attachment. In Synechococcus sp. (strain WH7803), this protein is Cytochrome c biogenesis protein CcsA.